A 426-amino-acid chain; its full sequence is MSALNKLFGDERKRDLESNVAALFSQSSGPVDTLEVKSKPRTLLPVVSKRQETETAKPAEPTEIVEADLPRKRAKKAKKTNEDDDHLEEKYMQQVLKEDSDHESEAEAPTEPVVELKPSKRASRPDMKEEELAKAERTVFVGNVPHEAITDKKVYKEFKQLVAQRKLSKEDEDDEEQKAEKYAVESIRFRSIAFEEALPRKVAFVQQKLHHTRDSVNAYVVYAEKEAVTAACKLNGSVFHDHHLRFDSVAHPAPHDRKRSVFVGNLDFEESEESLWKHFMSCGPIEYVRIVRDPKTNVGKGFAYVQFADLVSVNKALLLNDKKMAVGKGRKLRVTRCRNMQKVQRQSNTAALPKLTDQQKTKLGRARKVLGKADRATLGKLTIEGTRATKGANTPNLRVKKARSKTGRVTKRSQAFKKAEANKKQK.

Residues 26–128 form a disordered region; it reads QSSGPVDTLE…SKRASRPDMK (103 aa). Over residues 87 to 105 the composition is skewed to basic and acidic residues; sequence LEEKYMQQVLKEDSDHESE. RRM domains are found at residues 137 to 251 and 259 to 339; these read RTVF…SVAH and RSVF…RCRN. The segment covering 401-415 has biased composition (basic residues); the sequence is KARSKTGRVTKRSQA. The segment at 401–426 is disordered; the sequence is KARSKTGRVTKRSQAFKKAEANKKQK. The segment covering 417-426 has biased composition (basic and acidic residues); the sequence is KKAEANKKQK.

Belongs to the RRM RBM34 family.

Its subcellular location is the nucleus. It localises to the nucleolus. Functionally, involved in pre-25S rRNA processing. This is Nucleolar protein 12 (NOP12) from Eremothecium gossypii (strain ATCC 10895 / CBS 109.51 / FGSC 9923 / NRRL Y-1056) (Yeast).